A 145-amino-acid polypeptide reads, in one-letter code: D-aminoacyl-tRNA deacylase (145 aa).

The Gly-cisPro motif, important for rejection of L-amino acids signature appears at 137–138 (GP).

Belongs to the DTD family. Homodimer.

It localises to the cytoplasm. The enzyme catalyses glycyl-tRNA(Ala) + H2O = tRNA(Ala) + glycine + H(+). It catalyses the reaction a D-aminoacyl-tRNA + H2O = a tRNA + a D-alpha-amino acid + H(+). An aminoacyl-tRNA editing enzyme that deacylates mischarged D-aminoacyl-tRNAs. Also deacylates mischarged glycyl-tRNA(Ala), protecting cells against glycine mischarging by AlaRS. Acts via tRNA-based rather than protein-based catalysis; rejects L-amino acids rather than detecting D-amino acids in the active site. By recycling D-aminoacyl-tRNA to D-amino acids and free tRNA molecules, this enzyme counteracts the toxicity associated with the formation of D-aminoacyl-tRNA entities in vivo and helps enforce protein L-homochirality. This Serratia proteamaculans (strain 568) protein is D-aminoacyl-tRNA deacylase.